The sequence spans 742 residues: Phosphoribosylformylglycinamidine synthase subunit PurL (742 aa).

Residue His-54 is part of the active site. Positions 57 and 96 each coordinate ATP. Glu-98 provides a ligand contact to Mg(2+). Residues 99–102 (SHNH) and Arg-121 contribute to the substrate site. Catalysis depends on His-100, which acts as the Proton acceptor. Asp-122 is a Mg(2+) binding site. Gln-245 serves as a coordination point for substrate. Asp-273 serves as a coordination point for Mg(2+). Residue 317–319 (ESQ) coordinates substrate. Residues Asp-500 and Gly-537 each coordinate ATP. Asn-538 contributes to the Mg(2+) binding site. Ser-540 is a substrate binding site.

This sequence belongs to the FGAMS family. Monomer. Part of the FGAM synthase complex composed of 1 PurL, 1 PurQ and 2 PurS subunits.

It localises to the cytoplasm. The enzyme catalyses N(2)-formyl-N(1)-(5-phospho-beta-D-ribosyl)glycinamide + L-glutamine + ATP + H2O = 2-formamido-N(1)-(5-O-phospho-beta-D-ribosyl)acetamidine + L-glutamate + ADP + phosphate + H(+). It participates in purine metabolism; IMP biosynthesis via de novo pathway; 5-amino-1-(5-phospho-D-ribosyl)imidazole from N(2)-formyl-N(1)-(5-phospho-D-ribosyl)glycinamide: step 1/2. In terms of biological role, part of the phosphoribosylformylglycinamidine synthase complex involved in the purines biosynthetic pathway. Catalyzes the ATP-dependent conversion of formylglycinamide ribonucleotide (FGAR) and glutamine to yield formylglycinamidine ribonucleotide (FGAM) and glutamate. The FGAM synthase complex is composed of three subunits. PurQ produces an ammonia molecule by converting glutamine to glutamate. PurL transfers the ammonia molecule to FGAR to form FGAM in an ATP-dependent manner. PurS interacts with PurQ and PurL and is thought to assist in the transfer of the ammonia molecule from PurQ to PurL. This chain is Phosphoribosylformylglycinamidine synthase subunit PurL, found in Geobacillus thermodenitrificans (strain NG80-2).